The sequence spans 169 residues: uncharacterized protein (169 aa).

The region spanning 28 to 157 (ELHLVIHVCI…EFIPYFFLNQ (130 aa)) is the Nudix hydrolase domain. The Nudix box signature appears at 65–87 (AGSALKGETSQQAAEREVQEELG). 2 residues coordinate Mg(2+): E81 and E85.

Belongs to the Nudix hydrolase family. The cofactor is Mg(2+).

This is an uncharacterized protein from Listeria monocytogenes serovar 1/2a (strain ATCC BAA-679 / EGD-e).